Consider the following 364-residue polypeptide: Thymidine kinase (364 aa).

Residue 36 to 43 (GPFGVGKT) coordinates ATP. E64 acts as the Proton acceptor in catalysis. Q108 is a binding site for substrate. Residue R201 coordinates ATP. R207 contributes to the substrate binding site.

This sequence belongs to the herpesviridae thymidine kinase family. In terms of assembly, homodimer.

The catalysed reaction is thymidine + ATP = dTMP + ADP + H(+). In terms of biological role, catalyzes the transfer of the gamma-phospho group of ATP to thymidine to generate dTMP in the salvage pathway of pyrimidine synthesis. The dTMP serves as a substrate for DNA polymerase during viral DNA replication. Allows the virus to be reactivated and to grow in non-proliferative cells lacking a high concentration of phosphorylated nucleic acid precursors. This Infectious laryngotracheitis virus (strain Thorne V882) (ILTV) protein is Thymidine kinase.